We begin with the raw amino-acid sequence, 526 residues long: NAD(P)H-quinone oxidoreductase subunit 2 (526 aa).

14 helical membrane-spanning segments follow: residues 16 to 36 (ILPE…DLIL), 43 to 63 (WTPY…YTQW), 80 to 100 (LSIA…LMSV), 110 to 130 (LGEF…LSGA), 133 to 153 (LVMI…LTGY), 168 to 188 (LLIG…LYGL), 212 to 232 (LALV…ISAV), 246 to 266 (PTPV…ALAI), 280 to 300 (WHFV…VVAL), 308 to 328 (LLAY…LANT), 336 to 356 (IFYL…VILF), 380 to 400 (LGLS…GFFG), 402 to 422 (IYLF…LGLI), and 468 to 488 (VGLI…NPLF).

This sequence belongs to the complex I subunit 2 family. NDH-1 can be composed of about 15 different subunits; different subcomplexes with different compositions have been identified which probably have different functions.

It localises to the cellular thylakoid membrane. The enzyme catalyses a plastoquinone + NADH + (n+1) H(+)(in) = a plastoquinol + NAD(+) + n H(+)(out). The catalysed reaction is a plastoquinone + NADPH + (n+1) H(+)(in) = a plastoquinol + NADP(+) + n H(+)(out). NDH-1 shuttles electrons from an unknown electron donor, via FMN and iron-sulfur (Fe-S) centers, to quinones in the respiratory and/or the photosynthetic chain. The immediate electron acceptor for the enzyme in this species is believed to be plastoquinone. Couples the redox reaction to proton translocation, and thus conserves the redox energy in a proton gradient. Cyanobacterial NDH-1 also plays a role in inorganic carbon-concentration. The protein is NAD(P)H-quinone oxidoreductase subunit 2 of Trichodesmium erythraeum (strain IMS101).